The sequence spans 314 residues: BCL2/adenovirus E1B 19 kDa protein-interacting protein 2 (314 aa).

Positions 1–21 (MEGVELKEEWQDEDFPIPLPE) are disordered. Residues 10–21 (WQDEDFPIPLPE) are compositionally biased toward acidic residues. Residues Ser-41 and Ser-77 each carry the phosphoserine modification. Residues 76–100 (ESGEIDLDGLDTPSENSNEFEWEDD) form a disordered region. Residue Thr-87 is modified to Phosphothreonine. A phosphoserine mark is found at Ser-89, Ser-92, and Ser-114. The region spanning 147 to 304 (IEPYKKVISH…CIKQVDQELN (158 aa)) is the CRAL-TRIO domain.

It is found in the cytoplasm. Its subcellular location is the perinuclear region. In terms of biological role, implicated in the suppression of cell death. Interacts with the BCL-2 and adenovirus E1B 19 kDa proteins. This Homo sapiens (Human) protein is BCL2/adenovirus E1B 19 kDa protein-interacting protein 2 (BNIP2).